The primary structure comprises 511 residues: Peptide transporter YePEPT (511 aa).

The Cytoplasmic segment spans residues 1 to 19 (MQTSTNTPGGRTFFGHPYP). Residues 20-45 (LSGLFLSEMWERFSFYGIRPLLILFM) traverse the membrane as a helical segment. At 46–59 (AATVFDGGMGLPRE) the chain is on the periplasmic side. A helical transmembrane segment spans residues 60 to 84 (QASAIVGIFAGSMYLAALPGGLLAD). At 85–88 (NWLG) the chain is on the cytoplasmic side. Residues 89 to 109 (QQRAVWYGSILIALGHLSIAL) form a helical membrane-spanning segment. Residues 110-115 (SAFFGN) are Periplasmic-facing. The helical transmembrane segment at 116–138 (DLFFIGLVFIVLGTGLFKTCISV) threads the bilayer. Topologically, residues 139–149 (MVGTLYKPGDA) are cytoplasmic. Residues 150–175 (RRDGGFSLFYMGINMGSFIAPLLSGW) form a helical membrane-spanning segment. Residues 176–181 (LLRTHG) are Periplasmic-facing. Residues 182–208 (WHWGFGIGGIGMLVALLIFRGFAIPAM) traverse the membrane as a helical segment. Topologically, residues 209–232 (KRYDAEVGLDSSWNKPTNQRQGVG) are cytoplasmic. Residues 233–253 (RWVTAIMAVVVVIIALISQGV) form a helical membrane-spanning segment. The Periplasmic segment spans residues 254-256 (IPI). A helical membrane pass occupies residues 257–279 (NPVMIASLLVYVIAASVTLYFIY). Over 280-294 (LFAFAKMSRKDRARL) the chain is Cytoplasmic. The helical transmembrane segment at 295 to 321 (LVCFILLVSAAFFWSAFEQKPTSFNLF) threads the bilayer. Topologically, residues 322 to 335 (ANDYTDRMVMGFEI) are periplasmic. A helical transmembrane segment spans residues 336 to 357 (PTVWFQSINALFIILLAPVFSW). Topologically, residues 358–369 (AWPALAKKKIQP) are cytoplasmic. A helical transmembrane segment spans residues 370–396 (SSITKFVIGILCAAAGFAVMMYAAQHV). Residues 397-405 (LSSGGAGVS) lie on the Periplasmic side of the membrane. A helical membrane pass occupies residues 406–426 (PLWLVMSILLLTLGELCLSPI). Over 427-441 (GLATMTLLAPDRMRG) the chain is Cytoplasmic. The chain crosses the membrane as a helical span at residues 442–462 (QVMGLWFCASSLGNLAAGLIG). The Periplasmic portion of the chain corresponds to 463–471 (GHVKADQLD). Residues 472-496 (MLPTLFARCSIALVICAAVLILLIV) traverse the membrane as a helical segment. Residues 497-511 (PIRRLMNNTQGQQTA) lie on the Cytoplasmic side of the membrane.

This sequence belongs to the major facilitator superfamily. Proton-dependent oligopeptide transporter (POT/PTR) (TC 2.A.17) family.

Its subcellular location is the cell inner membrane. With respect to regulation, transport is inhibited by the proton ionophore carbonyl cyanide m-chlorophenylhydrazone (CCCP). Its function is as follows. Mediates the proton-dependent uptake of dipeptides. Shows higher affinity for dipeptides with a negatively charged amino acid residue at the N-terminal position, such as Asp-Ala and Glu-Ala. Also displays specificity for Ala-Ala, Ala-Tyr and Tyr-Ala. This chain is Peptide transporter YePEPT, found in Yersinia enterocolitica subsp. palearctica serotype O:3 (strain YE-P4).